Reading from the N-terminus, the 102-residue chain is ATP-dependent Clp protease adapter protein ClpS (102 aa).

Belongs to the ClpS family. Binds to the N-terminal domain of the chaperone ClpA.

In terms of biological role, involved in the modulation of the specificity of the ClpAP-mediated ATP-dependent protein degradation. The protein is ATP-dependent Clp protease adapter protein ClpS of Herminiimonas arsenicoxydans.